We begin with the raw amino-acid sequence, 901 residues long: Aconitate hydratase A (901 aa).

[4Fe-4S] cluster is bound by residues Cys-443, Cys-509, and Cys-512.

Belongs to the aconitase/IPM isomerase family. As to quaternary structure, monomer. Requires [4Fe-4S] cluster as cofactor.

The enzyme catalyses citrate = D-threo-isocitrate. It carries out the reaction (2S,3R)-3-hydroxybutane-1,2,3-tricarboxylate = 2-methyl-cis-aconitate + H2O. It functions in the pathway carbohydrate metabolism; tricarboxylic acid cycle; isocitrate from oxaloacetate: step 2/2. It participates in organic acid metabolism; propanoate degradation. In terms of biological role, involved in the catabolism of short chain fatty acids (SCFA) via the tricarboxylic acid (TCA)(acetyl degradation route) and probably the 2-methylcitrate cycle I (propionate degradation route). Catalyzes the reversible isomerization of citrate to isocitrate via cis-aconitate. Could catalyze the hydration of 2-methyl-cis-aconitate to yield (2R,3S)-2-methylisocitrate. The apo form of AcnA functions as a RNA-binding regulatory protein. The protein is Aconitate hydratase A (acnA) of Staphylococcus epidermidis (strain ATCC 12228 / FDA PCI 1200).